The chain runs to 271 residues: MAAEPPADGRDPPADDGAAGDGAVESAAAEALLSAASEQLTLVYQGEVYVFDPVPPQKVQAVLLVLGGSDMPPGLVSMAVPTTFDEKSTTVAARRVASLMRFREKRKERCFDKKIRYSVRKEVAQKMKRRKGQFAGRADFGDGSCSSAPCGSTANGEDDHIRETHCQNCGISSRLTPAMRRGPAGPRSLCNACGLMWANKGTLRSPLNAPKMTVQHPADLSKTGDTDDSKANLCAEHNQTTMKTDTEMVPEQEQKADVLPPTKEEDSMATS.

Residues 1–23 (MAAEPPADGRDPPADDGAAGDGA) form a disordered region. In terms of domain architecture, Tify spans 33–68 (LSAASEQLTLVYQGEVYVFDPVPPQKVQAVLLVLGG). A CCT domain is found at 95–137 (RVASLMRFREKRKERCFDKKIRYSVRKEVAQKMKRRKGQFAGR). Residues 166-193 (CQNCGISSRLTPAMRRGPAGPRSLCNAC) form a GATA-type zinc finger. Residues 238 to 271 (NQTTMKTDTEMVPEQEQKADVLPPTKEEDSMATS) form a disordered region. Over residues 252–271 (QEQKADVLPPTKEEDSMATS) the composition is skewed to basic and acidic residues.

The protein belongs to the type IV zinc-finger family. Class C subfamily.

It localises to the nucleus. Its function is as follows. Transcriptional activator that specifically binds 5'-GATA-3' or 5'-GAT-3' motifs within gene promoters. This chain is GATA transcription factor 19, found in Oryza sativa subsp. japonica (Rice).